We begin with the raw amino-acid sequence, 169 residues long: MKEITVTEPAFVTHFSCSGSACSDHCCKGWKITLDKTTVKKYLASKDATIRTIAQDNIILLKKNNSHWGEIKLPSALGNCPYLDEDRLCRVQKTLGAKALSHTCSSFPRAHHTYKNEVRNSLSLACPEVTSRILNDPDAMALGEKKSFSRHSILRRYFQRSKSYSICFA.

It belongs to the FliB family.

Required for the secretion of flagellin and expression of motility. This chain is Flagellar biosynthetic protein FliU (fliU), found in Salmonella muenchen.